The sequence spans 148 residues: Protein TIFY 5B (148 aa).

Residues 54 to 89 (PKQESQILTIFYNGHMCVSSDLTHLEANAILSLASR) form the Tify domain.

This sequence belongs to the TIFY/JAZ family. Ubiquitinated. Targeted for degradation by the SCF(COI1) E3 ubiquitin ligase-proteasome pathway during jasmonate signaling.

The protein resides in the nucleus. In terms of biological role, repressor of jasmonate responses. The protein is Protein TIFY 5B (TIFY 5B) of Arabidopsis thaliana (Mouse-ear cress).